We begin with the raw amino-acid sequence, 303 residues long: 5'-3' exonuclease (303 aa).

A 5'-3' exonuclease domain is found at 179–262 (ISPAQWVDVK…LATITTEIEA (84 aa)).

Functionally, 5'-3' exonuclease acting preferentially on double-stranded DNA. The chain is 5'-3' exonuclease from Halalkalibacterium halodurans (strain ATCC BAA-125 / DSM 18197 / FERM 7344 / JCM 9153 / C-125) (Bacillus halodurans).